The sequence spans 206 residues: MNFEQTHRDALTEVLRWRRDVRHFRPDPIDEAVIDRLRAVMDMAPSVGNARPWRVIRVDSPALRAEVLANFNAARAAAGSAYAGEQAEAYATLKLQGIDQAPLQLAVFTHRDPAAGHGLGRASMPVTLQQSTAMAFTRSGCRAGENLGLGMVSVLDPKAVERLLNAPPDWDFVAWLCIGVPEFTDDTPLLHRAGWQENLPTEWERR.

FMN contacts are provided by residues 18-22, Ser46, Leu95, and Ser153; that span reads RRDVR.

It belongs to the BluB family. Homooctamer.

The enzyme catalyses FMNH2 + O2 = dialurate + 5,6-dimethylbenzimidazole + D-erythrose 4-phosphate + H(+). Its function is as follows. Involved in the biosynthesis of cobalamin (vitamin B12). Catalyzes the oxidative fragmentation and contraction of the isoalloxazine heterocycle and the cleavage of the ribityl tail of FMNH(2) to form 5,6-dimethylbenzimidazole (DMB) and D-erythrose 4-phosphate (E4P). NAD(P)H is only required initially to reduce FMN and oxygen drives the oxidative fragmentation. The polypeptide is 5,6-dimethylbenzimidazole synthase (bluB) (Rhodobacter capsulatus (Rhodopseudomonas capsulata)).